We begin with the raw amino-acid sequence, 550 residues long: MNADSRTRLNQRPEWTALAKHREELAGTHLRDLFAADPGRGAGYTLEVGDLHVDYSKHLVTDETLRLLRELAAATDVFGLRDAMFRGEKINVTEDRAVLHTALRAPRDAVVEVDGENVVPAVHAVLDKMSTFAERVRTGEWTGHTGKPIKNIVNVGIGGSDLGPAMAYEVLRSFTDRSLTVRFVSNVDGADLHEAVRDLDPAETLFVIASKTFTTIETITNATSARDWLLTELKAGQEAVAKHFVALSTNAEKVSEFGIDTANMFEFWDWVGGRYSFDSAIGLSLMIAIGPERFREMLDGFRIVDEHFESAPAEDNVPLLLGLLGIWYGNFHDAQSHAVLPYSHYLSKFTAYLQQLDMESNGKSVQRDGNPVEWETGPVVWGTPGTNGQHAYYQLIHQGTKLIPADFIGFAEPVADLLPGLVAQHDLLMANFFAQTQALAFGKTPDEVRAEGVPEQLVPHKTFKGNHPTTTILAKELTPSVLGQLIALYEHKVFVQGAVWNIDSFDQWGVELGKVLAKRVEPALTEGADVPGLDESTKALVAKYRQLRGR.

Residue E359 is the Proton donor of the active site. Active-site residues include H390 and K514.

This sequence belongs to the GPI family.

The protein localises to the cytoplasm. It catalyses the reaction alpha-D-glucose 6-phosphate = beta-D-fructose 6-phosphate. Its pathway is carbohydrate biosynthesis; gluconeogenesis. It functions in the pathway carbohydrate degradation; glycolysis; D-glyceraldehyde 3-phosphate and glycerone phosphate from D-glucose: step 2/4. Catalyzes the reversible isomerization of glucose-6-phosphate to fructose-6-phosphate. This Streptomyces avermitilis (strain ATCC 31267 / DSM 46492 / JCM 5070 / NBRC 14893 / NCIMB 12804 / NRRL 8165 / MA-4680) protein is Glucose-6-phosphate isomerase 2.